Reading from the N-terminus, the 158-residue chain is Cytochrome b562 (158 aa).

The next 4 membrane-spanning stretches (helical) occupy residues 12 to 32 (ITLH…GETM), 46 to 66 (AGVG…LTLV), 87 to 107 (VAAG…ALGM), and 121 to 141 (HVLA…SALF). Heme b contacts are provided by His-15 and His-53. 2 residues coordinate heme b: His-121 and His-135.

It belongs to the cytochrome b561 family. As to quaternary structure, homodimer. The cofactor is heme b.

It is found in the cell membrane. Its function is as follows. Cytochrome b562 is an integral component of the cytochrome b-c1 complex in the cyclic electron transfer system of photosynthetic bacteria. The polypeptide is Cytochrome b562 (Cereibacter sphaeroides (strain ATCC 17023 / DSM 158 / JCM 6121 / CCUG 31486 / LMG 2827 / NBRC 12203 / NCIMB 8253 / ATH 2.4.1.) (Rhodobacter sphaeroides)).